The following is a 264-amino-acid chain: Pimeloyl-[acyl-carrier protein] methyl ester esterase (264 aa).

The 222-residue stretch at 23–244 folds into the AB hydrolase-1 domain; sequence LVMLHGWGVN…MLAKASHAPF (222 aa). Residues W29, 87–88, and 150–154 each bind substrate; these read SL and FLAIQ. Catalysis depends on S87, which acts as the Nucleophile. Residues D214 and H241 contribute to the active site. H241 lines the substrate pocket.

It belongs to the AB hydrolase superfamily. Carboxylesterase BioH family. As to quaternary structure, monomer.

It is found in the cytoplasm. The enzyme catalyses 6-carboxyhexanoyl-[ACP] methyl ester + H2O = 6-carboxyhexanoyl-[ACP] + methanol + H(+). It participates in cofactor biosynthesis; biotin biosynthesis. The physiological role of BioH is to remove the methyl group introduced by BioC when the pimeloyl moiety is complete. It allows to synthesize pimeloyl-ACP via the fatty acid synthetic pathway through the hydrolysis of the ester bonds of pimeloyl-ACP esters. In Shewanella sp. (strain MR-7), this protein is Pimeloyl-[acyl-carrier protein] methyl ester esterase.